The primary structure comprises 420 residues: Glucose-1-phosphate adenylyltransferase (420 aa).

Alpha-D-glucose 1-phosphate is bound by residues Y107, G172, 187–188 (EK), and S205.

This sequence belongs to the bacterial/plant glucose-1-phosphate adenylyltransferase family. Homotetramer.

It catalyses the reaction alpha-D-glucose 1-phosphate + ATP + H(+) = ADP-alpha-D-glucose + diphosphate. Its pathway is glycan biosynthesis; glycogen biosynthesis. In terms of biological role, involved in the biosynthesis of ADP-glucose, a building block required for the elongation reactions to produce glycogen. Catalyzes the reaction between ATP and alpha-D-glucose 1-phosphate (G1P) to produce pyrophosphate and ADP-Glc. This Rhizobium rhizogenes (strain K84 / ATCC BAA-868) (Agrobacterium radiobacter) protein is Glucose-1-phosphate adenylyltransferase.